A 437-amino-acid polypeptide reads, in one-letter code: Methylenetetrahydrofolate--tRNA-(uracil-5-)-methyltransferase TrmFO (437 aa).

FAD is bound at residue 10-15; the sequence is GAGLAG.

It belongs to the MnmG family. TrmFO subfamily. FAD serves as cofactor.

Its subcellular location is the cytoplasm. The enzyme catalyses uridine(54) in tRNA + (6R)-5,10-methylene-5,6,7,8-tetrahydrofolate + NADH + H(+) = 5-methyluridine(54) in tRNA + (6S)-5,6,7,8-tetrahydrofolate + NAD(+). It carries out the reaction uridine(54) in tRNA + (6R)-5,10-methylene-5,6,7,8-tetrahydrofolate + NADPH + H(+) = 5-methyluridine(54) in tRNA + (6S)-5,6,7,8-tetrahydrofolate + NADP(+). Its function is as follows. Catalyzes the folate-dependent formation of 5-methyl-uridine at position 54 (M-5-U54) in all tRNAs. The polypeptide is Methylenetetrahydrofolate--tRNA-(uracil-5-)-methyltransferase TrmFO (Pelotomaculum thermopropionicum (strain DSM 13744 / JCM 10971 / SI)).